The chain runs to 596 residues: Fc receptor-like protein 5 (596 aa).

An N-terminal signal peptide occupies residues 1–26; it reads MSGSFSPCVVFTQMWLTLLVVTPVNG. The Extracellular portion of the chain corresponds to 27 to 496; it reads QHEAAQQSVV…MTKNRSVPMA (470 aa). Ig-like C2-type domains follow at residues 34-115, 106-199, 207-294, 296-384, and 398-483; these read SVVS…VEFS, PSMH…NTVV, PRPV…TAFI, PVQR…SFVS, and PVLT…IRIS. Disulfide bonds link Cys-55-Cys-99, Cys-137-Cys-181, and Cys-228-Cys-277. Asn-324 carries an N-linked (GlcNAc...) asparagine glycan. 2 disulfides stabilise this stretch: Cys-325–Cys-373 and Cys-419–Cys-466. Asn-436 carries an N-linked (GlcNAc...) asparagine glycan. Residues 497 to 517 traverse the membrane as a helical segment; the sequence is AGITVGLLIMAVGVFLFYCWF. Over 518-596 the chain is Cytoplasmic; sequence SRKAGGKPTS…RSRCQMAEKK (79 aa). 2 disordered regions span residues 522-544 and 561-596; these read GGKPTSDDSRNPSDSEPQEPTYY and EENVIYTEVRRTQPRQKHADQESESPRSRCQMAEKK. Positions 577–596 are enriched in basic and acidic residues; it reads KHADQESESPRSRCQMAEKK.

As to quaternary structure, interacts with CR2. Interacts with CD19. Phosphorylated on cytoplasmic tyrosines; required for interaction with protein tyrosine phosphatases and protein tyrosine kinases. In terms of tissue distribution, preferentially expressed in marginal zone B cells.

The protein localises to the cell membrane. Functionally, plays an important role in B-cell response to antigen that acts both as a negative or positive coreceptor. Inhibits B-cell receptor (BCR) signaling in the absence of CR2 stimulation but engagement with CR2 and the BCR lead to a superior calcium response compared to CR2 and BCR costimulation. May be involved in B-cell development and differentiation in peripheral lymphoid organs and may be useful markers of B-cell stages. May have an immunoregulatory role in marginal zone B-cells. May play a role in fertilization. In Mus musculus (Mouse), this protein is Fc receptor-like protein 5 (Fcrl5).